Consider the following 217-residue polypeptide: Leucyl/phenylalanyl-tRNA--protein transferase (217 aa).

The protein belongs to the L/F-transferase family.

Its subcellular location is the cytoplasm. It carries out the reaction N-terminal L-lysyl-[protein] + L-leucyl-tRNA(Leu) = N-terminal L-leucyl-L-lysyl-[protein] + tRNA(Leu) + H(+). The enzyme catalyses N-terminal L-arginyl-[protein] + L-leucyl-tRNA(Leu) = N-terminal L-leucyl-L-arginyl-[protein] + tRNA(Leu) + H(+). It catalyses the reaction L-phenylalanyl-tRNA(Phe) + an N-terminal L-alpha-aminoacyl-[protein] = an N-terminal L-phenylalanyl-L-alpha-aminoacyl-[protein] + tRNA(Phe). Functionally, functions in the N-end rule pathway of protein degradation where it conjugates Leu, Phe and, less efficiently, Met from aminoacyl-tRNAs to the N-termini of proteins containing an N-terminal arginine or lysine. This chain is Leucyl/phenylalanyl-tRNA--protein transferase, found in Caulobacter vibrioides (strain ATCC 19089 / CIP 103742 / CB 15) (Caulobacter crescentus).